We begin with the raw amino-acid sequence, 250 residues long: Adapter protein MecA (250 aa).

The protein belongs to the MecA family. Homodimer.

Its function is as follows. Enables the recognition and targeting of unfolded and aggregated proteins to the ClpC protease or to other proteins involved in proteolysis. This is Adapter protein MecA from Streptococcus sanguinis (strain SK36).